The following is a 166-amino-acid chain: Dihydrofolate reductase (166 aa).

The region spanning 6–164 (KISLIVAMDK…YDYYFHIYER (159 aa)) is the DHFR domain. Residue 10 to 12 (IVA) participates in substrate binding. NADP(+) contacts are provided by residues 11-12 (VA) and 19-24 (IGKDND). Aspartate 32 is a binding site for substrate. Position 48–51 (48–51 (GRKN)) interacts with NADP(+). Residue arginine 62 coordinates substrate. Residues 67–70 (LTRD) and 100–105 (FGGEQI) contribute to the NADP(+) site. Residue threonine 119 coordinates substrate.

It belongs to the dihydrofolate reductase family.

It catalyses the reaction (6S)-5,6,7,8-tetrahydrofolate + NADP(+) = 7,8-dihydrofolate + NADPH + H(+). It functions in the pathway cofactor biosynthesis; tetrahydrofolate biosynthesis; 5,6,7,8-tetrahydrofolate from 7,8-dihydrofolate: step 1/1. Its function is as follows. Key enzyme in folate metabolism. Catalyzes an essential reaction for de novo glycine and purine synthesis, and for DNA precursor synthesis. This is Dihydrofolate reductase (dfrD) from Staphylococcus haemolyticus.